A 390-amino-acid chain; its full sequence is UPF0229 protein ABC1477 (390 aa).

Disordered regions lie at residues 1 to 31 and 81 to 118; these read MEKD…RHQE and VGQG…QAGE. Over residues 7–16 the composition is skewed to polar residues; sequence RQFTISQENW. 2 stretches are compositionally biased toward basic and acidic residues: residues 22–31 and 86–100; these read GFQDQRRHQE and GDSK…DPNG.

The protein belongs to the UPF0229 family.

This chain is UPF0229 protein ABC1477, found in Shouchella clausii (strain KSM-K16) (Alkalihalobacillus clausii).